The primary structure comprises 627 residues: MALVSIAPLASKSCLHKSLSSSAHELKTICRTIPTLGMSRRGKSATPSMSMSLTTTVSDDGVQRRMGDFHSNLWNDDFIQSLSTSYGEPSYRERAERLIGEVKKMFNSMSSEDGELISPHNDLIQRVWMVDSVERLGIERHFKNEIKSALDYVYSYWSEKGIGCGRESVVADLNSTALGFRTLRLHGYAVSADVLNLFKDQNGQFACSPSQTEEEIRSVLNLYRASLIAFPGEKVMEEAEIFSAKYLEESLQKISVSSLSQEIRDVLEYGWHTYLPRMEARNHIDVFGQDTQNSKSCINTEKLLELAKLEFNIFHSLQKRELEYLVRWWKDSGSPQMTFCRHRHVEYYTLASCIAFEPQHSGFRLGFAKACHIITILDDMYDTFGTVDELELFTAAMKRWDPSAADCLPEYMKGVYLILYDTVNEMSREAEKAQGRDTLDYARRAWDDYLDSYMQEAKWIATGYLPTFAEYYENGKVSSGHRTSALQPILTMDIPFPPHILKEVDFPSKLNDLACAILRLRGDTRCYKADRARGEEASSISCYMKDNPGATEEDALDHINAMISDVIRGLNWELLNPNSSVPISSKKHVFDISRAFHYGYKYRDGYSVANIETKSLVKRTVIDPVTL.

A chloroplast-targeting transit peptide spans 1 to 36 (MALVSIAPLASKSCLHKSLSSSAHELKTICRTIPTL). Asp-378, Asp-382, and Asp-530 together coordinate Mg(2+). The DDXXD motif signature appears at 378-382 (DDMYD).

This sequence belongs to the terpene synthase family. Tpsd subfamily. Mg(2+) is required as a cofactor. Mn(2+) serves as cofactor.

The protein resides in the plastid. The protein localises to the chloroplast. The enzyme catalyses (2E)-geranyl diphosphate = (1S,5S)-beta-pinene + diphosphate. The catalysed reaction is (2E)-geranyl diphosphate = (1S,5S)-alpha-pinene + diphosphate. The protein operates within terpene metabolism; oleoresin biosynthesis. Its function is as follows. Terpene synthase (TPS) involved in the biosynthesis of monoterpene natural products included in conifer oleoresin secretions and volatile emissions; these compounds contribute to biotic and abiotic stress defense against herbivores and pathogens. Catalyzes the conversion of (2E)-geranyl diphosphate (GPP) to (1S,5S)-beta-pinene. This Picea sitchensis (Sitka spruce) protein is (-)-alpha-pinene synthase 1, chloroplastic.